The chain runs to 384 residues: Secreted effector protein EspF(U) (384 aa).

Repeat copies occupy residues 96–142 (IXPA…AEHG), 143–189 (IQPA…AEHG), 190–236 (IQPA…AEHG), 237–283 (IZPA…AEHG), 284–330 (IQPA…AEHG), and 331–377 (IQPA…AEHG). The interval 96–377 (IXPARSMAEH…RLMQHLAEHG (282 aa)) is 6 X 48 AA approximate tandem repeats. The disordered stretch occupies residues 247–266 (IPPAPNWPAPPPPVQNEQSR). The segment covering 248 to 260 (PPAPNWPAPPPPV) has biased composition (pro residues).

This sequence belongs to the EspF(U)/TccP family. In terms of assembly, interacts with host BAIAP2 and host WASL/N-WASP. Can also interact with host proteins BAIAP2L1 and WAS/WASP.

The protein resides in the secreted. It is found in the host cytoplasm. Required for efficient pedestal formation in host epithelial cells during infection. Acts as an intermediate between Tir (via host BAIAP2) and host WASL/N-WASP. Directly binds and activates WASL/N-WASP, which stimulates actin polymerization and leads to the formation of actin pedestals at the sites of bacterial adhesion. The chain is Secreted effector protein EspF(U) (espF(U)) from Escherichia coli O157:H7.